The following is a 250-amino-acid chain: Small ribosomal subunit protein uS2 (250 aa).

Belongs to the universal ribosomal protein uS2 family.

The polypeptide is Small ribosomal subunit protein uS2 (Marinobacter nauticus (strain ATCC 700491 / DSM 11845 / VT8) (Marinobacter aquaeolei)).